Reading from the N-terminus, the 266-residue chain is Gasdermin bGSDM (266 aa).

Cys-6 carries the S-palmitoyl cysteine lipid modification. 4 beta stranded membrane-spanning segments follow: residues 70-86 (ISHS…AGNF), 99-117 (APKL…FSFS), 163-180 (AIDM…DVQA), and 189-205 (LGGK…TISF). Positions 245–266 (GAAEPYLLRRGQVLIVEDMQAT) are C-terminal region.

This sequence belongs to the bacterial gasdermin family. Monomer. As to quaternary structure, forms large, homooligomeric ring-shaped pores when inserted in membranes. Cleavage by the adjacently encoded protease (probably ISF6_0256) predicted to occur between Glu-244 and Gly-245 relieves autoinhibition, releasing the N-terminus which initiates loss of cell integrity. In terms of processing, palmitoylation helps stabilize the inactive state; may self palmitoylate. Palmitoylation plays a significant role in pore formation.

It is found in the cytoplasm. It localises to the cell inner membrane. Its activity is regulated as follows. The full-length protein before cleavage is inactive: intramolecular interactions between the N-terminal domain and the C-terminal region as well as the lipid modification, mediate autoinhibition. The pyroptosis-like-inducing activity is carried by the released N-terminal domain (Gasdermin bGSDM, N-terminus). In terms of biological role, precursor of a pore-forming protein involved in defense against bacteriophages. Cleavage of this precursor by its dedicated, neighboring protease (probably ISF6_0256) releases the active moiety (gasdermin bGSDM, N-terminus) which inserts into membranes, forming pores and triggering cell death. Pore-forming protein that causes membrane permeabilization via a pyroptosis-like activity. Makes ring-like pores with an interior pore diameter of 300-400 Angstroms, when integrated in liposomes. The polypeptide is Gasdermin bGSDM (Piscinibacter sakaiensis (Ideonella sakaiensis)).